Here is a 68-residue protein sequence, read N- to C-terminus: Amphipathic peptide OcyC1 (68 aa).

Positions 1–23 (MKAQLCILLIALVLFQTFSQSDA) are cleaved as a signal peptide. Position 36 is a phenylalanine amide (phenylalanine 36). A propeptide spanning residues 38-68 (RRGLNDLDDLDELFDGEISQADVDFLNELMR) is cleaved from the precursor.

This sequence belongs to the non-disulfide-bridged peptide (NDBP) superfamily. Short antimicrobial peptide (group 4) family. Expressed by the venom gland.

It localises to the secreted. It is found in the target cell membrane. Functionally, antimicrobial peptide. Inhibits the growth of Gram-positive and Gram-negative bacteria. Shows antifungal activity with MIC values ranging from 12.5 to 25 uM. Also shows an inhibitory activity on C.albicans biofilms at high concentrations. Shows low cytotoxic activity and has weak hemolytic activity. This chain is Amphipathic peptide OcyC1, found in Opisthacanthus cayaporum (South American scorpion).